We begin with the raw amino-acid sequence, 327 residues long: Microtubule-associated protein RP/EB family member 2 (327 aa).

Residues 1-17 are compositionally biased toward polar residues; it reads MPGPTQTLSPNGENNND. The interval 1-20 is disordered; that stretch reads MPGPTQTLSPNGENNNDVIH. In terms of domain architecture, Calponin-homology (CH) spans 56 to 158; the sequence is TMSRHDIIAW…FIQWFKKFFD (103 aa). Disordered regions lie at residues 170–238 and 295–327; these read EARQ…DKDL and LYSSEEQESHTEQHEGEEEQEHGHEEAEQQEEY. One can recognise an EB1 C-terminal domain in the interval 234–304; the sequence is SDKDLETQVS…LYSSEEQESH (71 aa).

Belongs to the MAPRE family.

The protein resides in the cytoplasm. It localises to the cytoskeleton. Functionally, may be involved in microtubule polymerization, and spindle function by stabilizing microtubules and anchoring them at centrosomes. The protein is Microtubule-associated protein RP/EB family member 2 (mapre2) of Xenopus laevis (African clawed frog).